The primary structure comprises 445 residues: Histidinol dehydrogenase (445 aa).

Residues tyrosine 138, glutamine 199, and asparagine 222 each contribute to the NAD(+) site. Residues serine 245, glutamine 267, and histidine 270 each contribute to the substrate site. 2 residues coordinate Zn(2+): glutamine 267 and histidine 270. Residues glutamate 335 and histidine 336 each act as proton acceptor in the active site. 4 residues coordinate substrate: histidine 336, aspartate 369, glutamate 423, and histidine 428. Zn(2+) is bound at residue aspartate 369. Residue histidine 428 participates in Zn(2+) binding.

Belongs to the histidinol dehydrogenase family. It depends on Zn(2+) as a cofactor.

The catalysed reaction is L-histidinol + 2 NAD(+) + H2O = L-histidine + 2 NADH + 3 H(+). It participates in amino-acid biosynthesis; L-histidine biosynthesis; L-histidine from 5-phospho-alpha-D-ribose 1-diphosphate: step 9/9. Functionally, catalyzes the sequential NAD-dependent oxidations of L-histidinol to L-histidinaldehyde and then to L-histidine. This is Histidinol dehydrogenase from Burkholderia pseudomallei (strain 1710b).